The following is a 346-amino-acid chain: MPTNFAAIVPGKNQSLVVQEAPYPTAGENRIVVRVHALAVNAVDYATQMMGETLFPWVTYPLVLGEDIAGEVVAIGPGVTRFKPGDRVVGHAVGTNSNNSAEGAFQQYVVLLENMASPLPHALEYQQAAVVPLAFSTAIVGLFQKDYLGLQIPSLTPTRTGKTLLIWGGATSVGCNAIQLAVAAGYEVITTCSPHNFDLVKSLGATAAFDYKKPSIRDDLREAFRGKTCAGALAIAGVVPQTRNEAAEACLNLVAESEGDKFVALSMPAPPNVPDGVSCKFIFASTVKDNEVSHQLYGYLGEALAHGSFIAAPEAEVVGTGLEAVQGALNALKQGVSAKKLVVTLP.

43 to 48 (VDYATQ) contacts NADP(+). Position 133–140 (133–140 (LAFSTAIV)) interacts with substrate. NADP(+) is bound by residues 170-173 (ATSV), 193-196 (SPHN), Y211, and 251-252 (LN). 269-273 (APPNV) contacts substrate. 336–337 (VS) provides a ligand contact to NADP(+).

This sequence belongs to the zinc-containing alcohol dehydrogenase family.

Its pathway is secondary metabolite biosynthesis. Its function is as follows. Dehydrogenase; part of the gene cluster that mediates the biosynthesis of nigerpyrone and its derivatives carbonarone A and pestalamide A. The biosynthesis pathway begins with the polyketide assembly by epaA to form phenylacetyl triketide precursor from successive condensation of two malonyl-CoA, presumably with one phenylacetyl-CoA starter unit produced by the phenylacetyl-CoA ligase epaB. For the nigerpyrone biosynthesis, the reactive polyketide chain is released as an aldehyde through the R-domain. A nonenzymatic cyclization and dehydration may create nigerpyrone. For the biosynthesis of carbonarone A and pestalamide A, an extra methyl group is added through the C-methyltransferase domain. Several further steps involving the dehydrogenase orf1, the cytochrome P450 monooxygenase orf2 and the FAD-dependent monooxygenase orf3 are required to form a carbonarone A precursor which is converted to carbonarone A via cyclization. The O-acetyltransferase epaC could catalyze the transfer of 2-methylsuccinyl-CoA, a common intermediate in the ethylmalonyl-CoA pathway, to generate the final product pestalamide A. This Aspergillus niger (strain ATCC MYA-4892 / CBS 513.88 / FGSC A1513) protein is Dehydrogenase orf1.